Consider the following 201-residue polypeptide: Pro-P-factor (201 aa).

The signal sequence occupies residues 1 to 20; that stretch reads MKITAVIALLFSLAAASPIP. 5 consecutive propeptides follow at residues 21–31, 58–65, 92–99, 126–133, and 160–201; these read VADPGVVSVSK, EFEAAPAK, EFEAAPEK, and TEED…KFES. N-linked (GlcNAc...) asparagine glycosylation is found at Asn187 and Asn194.

In terms of processing, proteolytically cleaved by kpr, probably at the C-terminal side of dibasic Lys-Arg residues. Glycosylated. Most of the precursor molecules are glycosylated on at least one site, but only a small proportion are glycosylated on both sites.

It is found in the secreted. Its function is as follows. In h- cells under nutritional starvation, P-factor induces alteration of cell morphology toward mating, arrest of the cell cycle at the G1 phase prior to the initiation of DNA synthesis and indirect transcriptional activation of the sxa2 gene which down-regulates the signaling pathway. The sequence is that of Pro-P-factor (map2) from Schizosaccharomyces pombe (strain 972 / ATCC 24843) (Fission yeast).